The chain runs to 326 residues: Probable iron chelatin transport system permease protein HP_0889 (326 aa).

A run of 10 helical transmembrane segments spans residues 7-27 (IALACVILAVVVLLFGGESLS), 64-84 (ILALLVGASLSGSGVVMQTIF), 91-111 (PFLLGISSGAMLGVAMAIAVV), 113-133 (SNIAILAFFGAILASLAVLAM), 142-162 (LSLVLSGVVLSAFLSALAGAI), 164-184 (FFVIPQKAQAIVVWLLGSLSL), 187-207 (YKDCLIAFIGLSLGFIPLFLL), 241-261 (VASALAVSVSGTIGWIGLVIP), 275-295 (LLLSSLLMGAFFLLLADVVAK), and 301-321 (DLPVGIATSVLGAPFFLWLLF).

It belongs to the binding-protein-dependent transport system permease family. FecCD subfamily.

The protein resides in the cell inner membrane. In terms of biological role, part of a binding-protein-dependent transport system for an iron chelatin; probably responsible for the translocation of the substrate across the membrane. This is Probable iron chelatin transport system permease protein HP_0889 from Helicobacter pylori (strain ATCC 700392 / 26695) (Campylobacter pylori).